The sequence spans 356 residues: Pyrimidine monooxygenase RutA (356 aa).

Residues 49–50 (IK), N115, E124, 140–141 (RY), and S190 each bind FMN.

The protein belongs to the NtaA/SnaA/DszA monooxygenase family. RutA subfamily.

The catalysed reaction is uracil + FMNH2 + NADH + O2 = (Z)-3-ureidoacrylate + FMN + NAD(+) + H2O + H(+). The enzyme catalyses thymine + FMNH2 + NADH + O2 = (Z)-2-methylureidoacrylate + FMN + NAD(+) + H2O + H(+). In terms of biological role, catalyzes the pyrimidine ring opening between N-3 and C-4 by an unusual flavin hydroperoxide-catalyzed mechanism, adding oxygen atoms in the process to yield ureidoacrylate peracid, that immediately reacts with FMN forming ureidoacrylate and FMN-N(5)-oxide. The FMN-N(5)-oxide reacts spontaneously with NADH to produce FMN. Requires the flavin reductase RutF to regenerate FMN in vivo. This is Pyrimidine monooxygenase RutA from Haliangium ochraceum (strain DSM 14365 / JCM 11303 / SMP-2).